Reading from the N-terminus, the 206-residue chain is Small ribosomal subunit protein uS4 (206 aa).

The disordered stretch occupies residues 28-48; that stretch reads YMERRPYGPGEHGRARKKQDS. In terms of domain architecture, S4 RNA-binding spans 95–160; it reads MRLDALVLRA…MPPFQVAAAG (66 aa).

It belongs to the universal ribosomal protein uS4 family. As to quaternary structure, part of the 30S ribosomal subunit. Contacts protein S5. The interaction surface between S4 and S5 is involved in control of translational fidelity.

In terms of biological role, one of the primary rRNA binding proteins, it binds directly to 16S rRNA where it nucleates assembly of the body of the 30S subunit. With S5 and S12 plays an important role in translational accuracy. The protein is Small ribosomal subunit protein uS4 of Paenarthrobacter aurescens (strain TC1).